A 155-amino-acid polypeptide reads, in one-letter code: 2-C-methyl-D-erythritol 2,4-cyclodiphosphate synthase (155 aa).

2 residues coordinate a divalent metal cation: Asp8 and His10. 4-CDP-2-C-methyl-D-erythritol 2-phosphate contacts are provided by residues 8–10 and 34–35; these read DVH and HS. Residue His42 coordinates a divalent metal cation. 4-CDP-2-C-methyl-D-erythritol 2-phosphate contacts are provided by residues 56-58, 61-65, 100-106, 132-135, Phe139, and Lys142; these read DIG, FPDSD, AQKPKML, and TTEE.

Belongs to the IspF family. Homotrimer. A divalent metal cation is required as a cofactor.

The catalysed reaction is 4-CDP-2-C-methyl-D-erythritol 2-phosphate = 2-C-methyl-D-erythritol 2,4-cyclic diphosphate + CMP. Its pathway is isoprenoid biosynthesis; isopentenyl diphosphate biosynthesis via DXP pathway; isopentenyl diphosphate from 1-deoxy-D-xylulose 5-phosphate: step 4/6. In terms of biological role, involved in the biosynthesis of isopentenyl diphosphate (IPP) and dimethylallyl diphosphate (DMAPP), two major building blocks of isoprenoid compounds. Catalyzes the conversion of 4-diphosphocytidyl-2-C-methyl-D-erythritol 2-phosphate (CDP-ME2P) to 2-C-methyl-D-erythritol 2,4-cyclodiphosphate (ME-CPP) with a corresponding release of cytidine 5-monophosphate (CMP). In Clostridium botulinum (strain Okra / Type B1), this protein is 2-C-methyl-D-erythritol 2,4-cyclodiphosphate synthase.